The primary structure comprises 572 residues: MRTSQYLLSTLKETPADAEVISHQLMLRAGMIRKLASGLYTWLPTGVRVLKKVENIVREEMNNAGAIEVSMPVVQPADLWQESGRWEQYGPELLRFVDRGERPFVLGPTHEEVITDLIRNELSSYKQLPLNFYQIQTKFRDEVRPRFGVMRSREFLMKDAYSFHTSQESLQETYDAMYAAYSKIFSRMGLDFRAVQADTGSIGGSASHEFQVLAQSGEDDVVFSDTSDYAANIELAEAIAPKEPRAAATQEMTLVDTPNAKTIAELVEQFNLPIKKTVKTLLVKAVEGSSFPLVALLVRGDHELNEVKAEKLPQVASPLTFATEEEIRAVVKAGPGSLGPVNMPIPVVIDRIVAAMSDFAAGANIDGKHYFGINWDRDVATPEVADIRNVVAGDPSPDGQGTLLIKRGIEVGHIFQLGTKYSEALKASVQGEDGRNQILTMGCYGIGVTRVVAAAIEQNYDERGIVWPDAIAPFQVAILPMNMHKSFRVQELAEKLYSELRAQGIEVLLDDRKERPGVMFADMELIGIPHTIVLGDRNLDNDDIEYKYRRNGEKQLIKTGDIVEYLVKQIKG.

Belongs to the class-II aminoacyl-tRNA synthetase family. ProS type 1 subfamily. Homodimer.

It is found in the cytoplasm. The catalysed reaction is tRNA(Pro) + L-proline + ATP = L-prolyl-tRNA(Pro) + AMP + diphosphate. Its function is as follows. Catalyzes the attachment of proline to tRNA(Pro) in a two-step reaction: proline is first activated by ATP to form Pro-AMP and then transferred to the acceptor end of tRNA(Pro). As ProRS can inadvertently accommodate and process non-cognate amino acids such as alanine and cysteine, to avoid such errors it has two additional distinct editing activities against alanine. One activity is designated as 'pretransfer' editing and involves the tRNA(Pro)-independent hydrolysis of activated Ala-AMP. The other activity is designated 'posttransfer' editing and involves deacylation of mischarged Ala-tRNA(Pro). The misacylated Cys-tRNA(Pro) is not edited by ProRS. This chain is Proline--tRNA ligase, found in Shigella dysenteriae serotype 1 (strain Sd197).